Consider the following 206-residue polypeptide: Protein GrpE (206 aa).

The span at 1–18 (MNNEDKKLQDEQLQKETV) shows a compositional bias: basic and acidic residues. The disordered stretch occupies residues 1–21 (MNNEDKKLQDEQLQKETVEAA).

It belongs to the GrpE family. Homodimer.

Its subcellular location is the cytoplasm. In terms of biological role, participates actively in the response to hyperosmotic and heat shock by preventing the aggregation of stress-denatured proteins, in association with DnaK and GrpE. It is the nucleotide exchange factor for DnaK and may function as a thermosensor. Unfolded proteins bind initially to DnaJ; upon interaction with the DnaJ-bound protein, DnaK hydrolyzes its bound ATP, resulting in the formation of a stable complex. GrpE releases ADP from DnaK; ATP binding to DnaK triggers the release of the substrate protein, thus completing the reaction cycle. Several rounds of ATP-dependent interactions between DnaJ, DnaK and GrpE are required for fully efficient folding. The chain is Protein GrpE from Photobacterium profundum (strain SS9).